The sequence spans 57 residues: Alpha-conotoxin-like Sm1.2 (57 aa).

A signal peptide spans 1–16 (MFTVFLLVVLATTVVS). Residues 17–42 (FPSDRESDGANDEARTDEPEEHGPDR) constitute a propeptide that is removed on maturation. A disordered region spans residues 17–46 (FPSDRESDGANDEARTDEPEEHGPDRNGCC). Residues 19–41 (SDRESDGANDEARTDEPEEHGPD) are compositionally biased toward basic and acidic residues. Cystine bridges form between Cys45/Cys51 and Cys46/Cys56. Residue Cys56 is modified to Cysteine amide.

It belongs to the conotoxin A superfamily. In terms of tissue distribution, expressed by the venom duct.

The protein resides in the secreted. Its function is as follows. Alpha-conotoxins act on postsynaptic membranes, they bind to the nicotinic acetylcholine receptors (nAChR) and thus inhibit them. In Conus stercusmuscarum (Fly-specked cone), this protein is Alpha-conotoxin-like Sm1.2.